We begin with the raw amino-acid sequence, 658 residues long: Trimethylamine N-oxide transport system permease protein TmoV (658 aa).

15 helical membrane passes run 20-40 (LGLA…AGLL), 103-123 (IGPI…YYLG), 127-147 (MALL…WDIA), 153-173 (VLVV…ISAW), 185-205 (VLAV…VIFF), 212-232 (GAVA…TLGL), 273-293 (VIML…PGLG), 300-320 (MGSF…LLAV), 349-369 (FLLM…VVPI), 420-440 (FMLS…ALLV), 447-467 (VLAA…RSVI), 469-489 (LYSV…IGVV), 517-537 (IPAI…ILIF), 585-605 (AVGF…AAFI), and 627-647 (FVLG…IMKW). The region spanning 147–326 (AMQTMSVLVV…LLAVTLDRMS (180 aa)) is the ABC transmembrane type-1 1 domain. The region spanning 465–644 (SVITLYSVLA…LMALTFDMVI (180 aa)) is the ABC transmembrane type-1 2 domain.

Belongs to the binding-protein-dependent transport system permease family. In terms of assembly, the complex is probably composed of two ATP-binding proteins (TmoW), two transmembrane proteins (TmoV) and a solute-binding protein (TmoX).

Its subcellular location is the cell inner membrane. Functionally, part of the ABC transporter complex TmoXWV involved in trimethylamine N-oxide (TMAO) import. Responsible for the translocation of the substrate across the membrane. Is specific for TMAO and essential for TMAO metabolism. In Ruegeria pomeroyi (strain ATCC 700808 / DSM 15171 / DSS-3) (Silicibacter pomeroyi), this protein is Trimethylamine N-oxide transport system permease protein TmoV.